The primary structure comprises 357 residues: Metacaspase-3 (357 aa).

H168 is a catalytic residue. Residues D183, D199, and D200 each contribute to the Ca(2+) site. C223 is a catalytic residue. D230 contributes to the Ca(2+) binding site.

This sequence belongs to the peptidase C14B family.

It localises to the recycling endosome. Activated by Ca(2+). Its function is as follows. Cysteine protease that cleaves specifically after arginine or lysine residues. In the bloodstream form, may cleave inactive metacaspase-4 MCA4 prior to MCA4 secretion. The protein is Metacaspase-3 of Trypanosoma brucei brucei.